Reading from the N-terminus, the 483-residue chain is Xylulose kinase (483 aa).

77–78 (MH) is a binding site for substrate. Residue Asp233 is the Proton acceptor of the active site.

Belongs to the FGGY kinase family.

It carries out the reaction D-xylulose + ATP = D-xylulose 5-phosphate + ADP + H(+). Its function is as follows. Catalyzes the phosphorylation of D-xylulose to D-xylulose 5-phosphate. In Klebsiella pneumoniae, this protein is Xylulose kinase.